Consider the following 354-residue polypeptide: UDP-3-O-acylglucosamine N-acyltransferase (354 aa).

Histidine 258 (proton acceptor) is an active-site residue.

The protein belongs to the transferase hexapeptide repeat family. LpxD subfamily. In terms of assembly, homotrimer.

The catalysed reaction is a UDP-3-O-[(3R)-3-hydroxyacyl]-alpha-D-glucosamine + a (3R)-hydroxyacyl-[ACP] = a UDP-2-N,3-O-bis[(3R)-3-hydroxyacyl]-alpha-D-glucosamine + holo-[ACP] + H(+). Its pathway is bacterial outer membrane biogenesis; LPS lipid A biosynthesis. In terms of biological role, catalyzes the N-acylation of UDP-3-O-acylglucosamine using 3-hydroxyacyl-ACP as the acyl donor. Is involved in the biosynthesis of lipid A, a phosphorylated glycolipid that anchors the lipopolysaccharide to the outer membrane of the cell. This is UDP-3-O-acylglucosamine N-acyltransferase from Sinorhizobium medicae (strain WSM419) (Ensifer medicae).